Here is a 651-residue protein sequence, read N- to C-terminus: Threonine--tRNA ligase (651 aa).

Positions 1-61 constitute a TGS domain; the sequence is MPTIQLPDGS…DKDVSLRIIT (61 aa). The catalytic stretch occupies residues 242–533; the sequence is DHRLLAKKMD…LLEESAGKLP (292 aa). Residues Cys-333, His-384, and His-510 each coordinate Zn(2+). Residues 631–651 form a disordered region; it reads ISQRSRKSPAPSPLFPVGGES.

The protein belongs to the class-II aminoacyl-tRNA synthetase family. In terms of assembly, homodimer. The cofactor is Zn(2+).

It localises to the cytoplasm. It carries out the reaction tRNA(Thr) + L-threonine + ATP = L-threonyl-tRNA(Thr) + AMP + diphosphate + H(+). In terms of biological role, catalyzes the attachment of threonine to tRNA(Thr) in a two-step reaction: L-threonine is first activated by ATP to form Thr-AMP and then transferred to the acceptor end of tRNA(Thr). Also edits incorrectly charged L-seryl-tRNA(Thr). This chain is Threonine--tRNA ligase, found in Coxiella burnetii (strain RSA 493 / Nine Mile phase I).